Here is a 108-residue protein sequence, read N- to C-terminus: Evasin P1127 (108 aa).

The N-terminal stretch at 1-28 (MEAKTFAFLEIAMFIALGIQTFVAVTDA) is a signal peptide. Cystine bridges form between Cys-41–Cys-63, Cys-45–Cys-65, and Cys-56–Cys-76. Residue Asn-44 is glycosylated (N-linked (GlcNAc...) asparagine). The N-linked (GlcNAc...) asparagine glycan is linked to Asn-89.

It localises to the secreted. In terms of biological role, salivary chemokine-binding protein which binds to host chemokines CXCL1, CXCL2, CXCL3, CXCL5 and CXCL8. The polypeptide is Evasin P1127 (Ixodes ricinus (Common tick)).